A 493-amino-acid polypeptide reads, in one-letter code: Transmembrane protein 184 homolog DDB_G0284525 (493 aa).

Residues 1-10 are compositionally biased toward polar residues; it reads MTQESSSSNH. The segment at 1–25 is disordered; it reads MTQESSSSNHYVDESSFDNNNNNNN. A run of 7 helical transmembrane segments spans residues 46 to 66, 87 to 107, 119 to 139, 180 to 200, 212 to 232, 254 to 274, and 293 to 313; these read VPAL…ATIL, IVRI…SLLL, DCYE…YGGG, YVLV…FGLY, FYNA…VVLF, IVVF…NFGW, and FLIC…FPYE. Residues Asn415 and Asn416 are each glycosylated (N-linked (GlcNAc...) asparagine).

The protein belongs to the TMEM184 family.

Its subcellular location is the cell membrane. In terms of biological role, probable transporter. In Dictyostelium discoideum (Social amoeba), this protein is Transmembrane protein 184 homolog DDB_G0284525 (tmem184A).